Here is a 624-residue protein sequence, read N- to C-terminus: Alpha-mannosidase I MNS4 (624 aa).

Residues Met1–Trp7 lie on the Cytoplasmic side of the membrane. A helical; Signal-anchor for type II membrane protein transmembrane segment spans residues Leu8–Leu28. Residues Ala29 to Ser624 lie on the Lumenal side of the membrane. N-linked (GlcNAc...) asparagine glycosylation is present at Asn115. Glu122 serves as the catalytic Proton donor. Asp262 is an active-site residue. Glu355 functions as the Proton donor in the catalytic mechanism. Glu376 is a catalytic residue. A Ca(2+)-binding site is contributed by Thr466. Residue Asn494 is glycosylated (N-linked (GlcNAc...) asparagine). The segment at Gln574–Ser624 is disordered. Over residues Phe586–Glu608 the composition is skewed to polar residues.

Belongs to the glycosyl hydrolase 47 family. It depends on Ca(2+) as a cofactor.

The protein localises to the endoplasmic reticulum membrane. It functions in the pathway protein modification; protein glycosylation. In terms of biological role, can convert Man(9)GlcNAc(2) and Man(8)GlcNAc(2) into N-glycans with a terminal alpha-1,6-linked Man residue in the C-branch. Functions in the formation of unique N-glycan structures that are specifically recognized by components of the endoplasmic reticulum-associated degradation (ERAD) machinery, which leads to the degradation of misfolded glycoproteins. Most likely generates N-glycan signal on misfolded glycoproteins that is subsequently recognized by OS9. Required for ERAD of the heavily glycosylated and misfolded BRI1 variants BRI1-5 and BRI1-9. Does not seem to play role in N-glycan processing of correctly folded proteins destined for secretion. This chain is Alpha-mannosidase I MNS4 (MNS4), found in Arabidopsis thaliana (Mouse-ear cress).